The primary structure comprises 416 residues: Queuine tRNA-ribosyltransferase accessory subunit 2 (416 aa).

4 residues coordinate Zn(2+): Cys350, Cys352, Cys355, and His381.

The protein belongs to the queuine tRNA-ribosyltransferase family. QTRT2 subfamily. As to quaternary structure, heterodimer of a catalytic subunit qtrt1 and an accessory subunit qtrt2. It depends on Zn(2+) as a cofactor.

Its subcellular location is the cytoplasm. It localises to the mitochondrion outer membrane. Its function is as follows. Non-catalytic subunit of the queuine tRNA-ribosyltransferase (TGT) that catalyzes the base-exchange of a guanine (G) residue with queuine (Q) at position 34 (anticodon wobble position) in tRNAs with GU(N) anticodons (tRNA-Asp, -Asn, -His and -Tyr), resulting in the hypermodified nucleoside queuosine (7-(((4,5-cis-dihydroxy-2-cyclopenten-1-yl)amino)methyl)-7-deazaguanosine). This is Queuine tRNA-ribosyltransferase accessory subunit 2 from Danio rerio (Zebrafish).